The following is a 76-amino-acid chain: Kappa-actitoxin-Avd4m (76 aa).

Residues 1–19 (MNKALFLCLVVLCAAVVFA) form the signal peptide. Residues 20-31 (AEDLQKAKHAPF) constitute a propeptide that is removed on maturation. 3 disulfides stabilise this stretch: Cys-37–Cys-72, Cys-39–Cys-65, and Cys-55–Cys-73.

This sequence belongs to the sea anemone type 3 (BDS) potassium channel toxin family. As to expression, weakly expressed in the ectodermal tissue from the distal and proximal tentacles, body wall, and oral disk.

The protein resides in the secreted. Its subcellular location is the nematocyst. Blocks Kv3 voltage-gated potassium channels. Reduces blood pressure. This is Kappa-actitoxin-Avd4m from Anemonia viridis (Snakelocks anemone).